The following is a 224-amino-acid chain: Viral late gene transcription factor 3 (224 aa).

This sequence belongs to the orthopoxvirus VLTF-3/OPG127 family. Interacts with the late transcription elongation factor VLTF-4/OPG110. Interacts with the late transcription factors VLTF-1/OPG093.

In terms of biological role, acts with RNA polymerase to initiate transcription from late gene promoters. The polypeptide is Viral late gene transcription factor 3 (OPG127) (Monkeypox virus).